The chain runs to 583 residues: Radixin (583 aa).

Residues 5–295 form the FERM domain; that stretch reads INVRVTTMDA…GNHELYMRRR (291 aa). 60–63 contributes to the a 1,2-diacyl-sn-glycero-3-phospho-(1D-myo-inositol) binding site; it reads KLNK. Lys-83 carries the post-translational modification N6-succinyllysine. Residue Lys-278 coordinates a 1,2-diacyl-sn-glycero-3-phospho-(1D-myo-inositol). Disordered stretches follow at residues 310-336, 374-407, and 458-526; these read REEK…AEKE, ELDQ…AKQA, and KTKE…RVNK. Residues 374-400 are compositionally biased toward basic and acidic residues; sequence ELDQERKRAKEEAERLEKERRAAEEAK. Residues 469-480 are compositionally biased toward pro residues; it reads APPPPPPPPVVP. Basic and acidic residues-rich tracts occupy residues 483-492 and 506-525; these read ENEHDEHDEN and MNHR…ERVN. The residue at position 564 (Thr-564) is a Phosphothreonine; by ROCK2.

Interacts with CPNE1 (via VWFA domain) and CPNE4 (via VWFA domain). Binds NHERF1. Interacts with NHERF1, NHERF2, LAYN, MME/NEP and ICAM2. Interacts (via FERM domain) with SPN/CD43 cytoplasmic tail. Interacts with CD44. Interacts with CLIC5; may work together in a complex which also includes EZR and MYO6 to stabilize linkages between the plasma membrane and subjacent actin cytoskeleton at the base of stereocilia. Phosphorylated by tyrosine-protein kinases. Phosphorylation by ROCK2 suppresses the head-to-tail association of the N-terminal and C-terminal halves resulting in an opened conformation which is capable of actin and membrane-binding.

Its subcellular location is the cell membrane. It is found in the cytoplasm. The protein resides in the cytoskeleton. The protein localises to the cleavage furrow. It localises to the cell projection. Its subcellular location is the microvillus. It is found in the stereocilium. A head-to-tail association, of the N-terminal and C-terminal halves results in a closed conformation (inactive form) which is incapable of actin or membrane-binding. In terms of biological role, probably plays a crucial role in the binding of the barbed end of actin filaments to the plasma membrane. This chain is Radixin (RDX), found in Sus scrofa (Pig).